A 185-amino-acid polypeptide reads, in one-letter code: Large ribosomal subunit protein uL5 (185 aa).

The protein belongs to the universal ribosomal protein uL5 family. In terms of assembly, part of the 50S ribosomal subunit; part of the 5S rRNA/L5/L18/L25 subcomplex. Contacts the 5S rRNA and the P site tRNA. Forms a bridge to the 30S subunit in the 70S ribosome.

This is one of the proteins that bind and probably mediate the attachment of the 5S RNA into the large ribosomal subunit, where it forms part of the central protuberance. In the 70S ribosome it contacts protein S13 of the 30S subunit (bridge B1b), connecting the 2 subunits; this bridge is implicated in subunit movement. Contacts the P site tRNA; the 5S rRNA and some of its associated proteins might help stabilize positioning of ribosome-bound tRNAs. The chain is Large ribosomal subunit protein uL5 from Caulobacter vibrioides (strain NA1000 / CB15N) (Caulobacter crescentus).